The sequence spans 105 residues: Ketoisovalerate oxidoreductase subunit VorD (105 aa).

2 consecutive 4Fe-4S ferredoxin-type domains span residues 44-73 (FKPV…IKPD) and 74-103 (GYVA…MIKE). [4Fe-4S] cluster is bound by residues Cys-53, Cys-56, Cys-59, Cys-63, Cys-83, Cys-86, Cys-89, and Cys-93.

As to quaternary structure, heterotetramer of one alpha, one beta, one delta and one gamma chain. Requires [4Fe-4S] cluster as cofactor.

It carries out the reaction 3-methyl-2-oxobutanoate + 2 oxidized [2Fe-2S]-[ferredoxin] + CoA = 2-methylpropanoyl-CoA + 2 reduced [2Fe-2S]-[ferredoxin] + CO2 + H(+). In Pyrococcus furiosus (strain ATCC 43587 / DSM 3638 / JCM 8422 / Vc1), this protein is Ketoisovalerate oxidoreductase subunit VorD (vorD).